Here is a 76-residue protein sequence, read N- to C-terminus: Small ribosomal subunit protein bS18 (76 aa).

It belongs to the bacterial ribosomal protein bS18 family. As to quaternary structure, part of the 30S ribosomal subunit. Forms a tight heterodimer with protein bS6.

Binds as a heterodimer with protein bS6 to the central domain of the 16S rRNA, where it helps stabilize the platform of the 30S subunit. This Alkaliphilus metalliredigens (strain QYMF) protein is Small ribosomal subunit protein bS18.